An 89-amino-acid chain; its full sequence is uncharacterized protein (89 aa).

The next 3 membrane-spanning stretches (helical) occupy residues 9–29 (ICNF…LHSI), 35–55 (ISLS…YIYL), and 65–85 (ILFA…FGTS).

The protein resides in the membrane. This is an uncharacterized protein from Schizosaccharomyces pombe (strain 972 / ATCC 24843) (Fission yeast).